The chain runs to 96 residues: UPF0235 protein VCM66_0443 (96 aa).

Belongs to the UPF0235 family.

The sequence is that of UPF0235 protein VCM66_0443 from Vibrio cholerae serotype O1 (strain M66-2).